The following is a 49-amino-acid chain: Light-harvesting protein B-880 alpha chain (49 aa).

Residues 1 to 12 (MYKLWLLFDPRR) lie on the Cytoplasmic side of the membrane. The chain crosses the membrane as a helical span at residues 13 to 33 (TLVALSAFLFVLGLIIHFISL). Histidine 29 contacts a bacteriochlorophyll. The Periplasmic segment spans residues 34-49 (STDRFNWLEGKPAVRA).

Belongs to the antenna complex alpha subunit family. The core complex is formed by different alpha and beta chains, binding bacteriochlorophyll molecules, and arranged most probably in tetrameric structures disposed around the reaction center. The non-pigmented gamma chains may constitute additional components.

The protein resides in the cell inner membrane. Antenna complexes are light-harvesting systems, which transfer the excitation energy to the reaction centers. This Rhodoblastus acidophilus (Rhodopseudomonas acidophila) protein is Light-harvesting protein B-880 alpha chain.